The primary structure comprises 180 residues: Large ribosomal subunit protein uL5 (180 aa).

Belongs to the universal ribosomal protein uL5 family. In terms of assembly, part of the 50S ribosomal subunit; part of the 5S rRNA/L5/L18/L25 subcomplex. Contacts the 5S rRNA and the P site tRNA. Forms a bridge to the 30S subunit in the 70S ribosome.

In terms of biological role, this is one of the proteins that bind and probably mediate the attachment of the 5S RNA into the large ribosomal subunit, where it forms part of the central protuberance. In the 70S ribosome it contacts protein S13 of the 30S subunit (bridge B1b), connecting the 2 subunits; this bridge is implicated in subunit movement. Contacts the P site tRNA; the 5S rRNA and some of its associated proteins might help stabilize positioning of ribosome-bound tRNAs. The sequence is that of Large ribosomal subunit protein uL5 from Lactobacillus acidophilus (strain ATCC 700396 / NCK56 / N2 / NCFM).